A 1147-amino-acid polypeptide reads, in one-letter code: Nucleolar protein 6 (1147 aa).

The segment at 1 to 49 (MQKKRSRAGAAEQEAASDDGEMSDSSDKMEVSQNKGKSGIKRAPEADDV) is disordered. The span at 15–24 (AASDDGEMSD) shows a compositional bias: acidic residues.

The protein belongs to the NRAP family. As to quaternary structure, part of the small subunit (SSU) processome, composed of more than 70 proteins and the RNA chaperone small nucleolar RNA (snoRNA) U3.

The protein localises to the nucleus. The protein resides in the nucleolus. Its subcellular location is the chromosome. Its function is as follows. Part of the small subunit (SSU) processome, first precursor of the small eukaryotic ribosomal subunit. During the assembly of the SSU processome in the nucleolus, many ribosome biogenesis factors, an RNA chaperone and ribosomal proteins associate with the nascent pre-rRNA and work in concert to generate RNA folding, modifications, rearrangements and cleavage as well as targeted degradation of pre-ribosomal RNA by the RNA exosome. The polypeptide is Nucleolar protein 6 (nol6) (Xenopus laevis (African clawed frog)).